A 445-amino-acid chain; its full sequence is GTPase Der (445 aa).

EngA-type G domains follow at residues 2-166 (FRVA…PEYE) and 182-355 (IKVA…NQAW). GTP is bound by residues 8-15 (GIPNVGKS), 55-59 (DTGGY), 118-121 (NKID), 188-195 (GKPNAGKS), 235-239 (DTAGM), and 300-303 (NKID). The region spanning 356–440 (KRVGTGQLNR…PIKLIFRGKE (85 aa)) is the KH-like domain.

It belongs to the TRAFAC class TrmE-Era-EngA-EngB-Septin-like GTPase superfamily. EngA (Der) GTPase family. As to quaternary structure, associates with the 50S ribosomal subunit.

Its function is as follows. GTPase that plays an essential role in the late steps of ribosome biogenesis. This is GTPase Der from Sulfurihydrogenibium sp. (strain YO3AOP1).